We begin with the raw amino-acid sequence, 1905 residues long: von Willebrand factor A domain-containing protein 8 (1905 aa).

A mitochondrion-targeting transit peptide spans Met1 to Leu45. Positions Met1–Phe260 are interaction with PEX7. Gly446–Thr453 serves as a coordination point for ATP. The span at Glu1541–Asn1560 shows a compositional bias: basic and acidic residues. Residues Glu1541–Gly1583 form a disordered region. The span at Thr1568 to Gly1583 shows a compositional bias: gly residues. The VWFA domain occupies Arg1714–Ile1896.

In terms of assembly, monomer. Interacts with PEX7. Interacts with PEX5 in a PEX7-dependent manner. In terms of tissue distribution, isoform 1 is predominantly expressed in liver, kidney, pancreas, heart, and skeletal muscle (at protein level).

Its subcellular location is the mitochondrion. Exhibits ATPase activity in vitro. The polypeptide is von Willebrand factor A domain-containing protein 8 (Vwa8) (Mus musculus (Mouse)).